The chain runs to 415 residues: Stimulator of interferon genes protein (415 aa).

The TIR domain maps to 29–163; the sequence is HVYHAFISYC…DIIQAISKPE (135 aa). Residue Glu-104 is part of the active site. A 2',3'-cGAMP-binding site is contributed by Arg-256. The tract at residues 387 to 415 is disordered; the sequence is KSPSSTNMVKSEPNIYREESGKTKSVERG. A compositionally biased stretch (basic and acidic residues) spans 401-415; that stretch reads IYREESGKTKSVERG.

The protein in the N-terminal section; belongs to the Toll-like receptor family. In the C-terminal section; belongs to the TMEM173 family. Homodimer.

It catalyses the reaction NAD(+) + H2O = ADP-D-ribose + nicotinamide + H(+). Sensor of cytosolic DNA from bacteria and viruses that promotes autophagy. Binds c-di-AMP, 2'3'-cGAMP, 3'3'-cGAMP and to a lesser extent c-di-GMP. Nucleotide binding has not been seen to stimulate NAD(+) hydrolase activity. The chain is Stimulator of interferon genes protein from Magallana gigas (Pacific oyster).